Here is a 381-residue protein sequence, read N- to C-terminus: Succinyl-diaminopimelate desuccinylase (381 aa).

H69 provides a ligand contact to Zn(2+). Residue D71 is part of the active site. D103 provides a ligand contact to Zn(2+). The active-site Proton acceptor is the E137. Residues E138, E166, and H355 each coordinate Zn(2+).

Belongs to the peptidase M20A family. DapE subfamily. Homodimer. Zn(2+) is required as a cofactor. It depends on Co(2+) as a cofactor.

The enzyme catalyses N-succinyl-(2S,6S)-2,6-diaminopimelate + H2O = (2S,6S)-2,6-diaminopimelate + succinate. The protein operates within amino-acid biosynthesis; L-lysine biosynthesis via DAP pathway; LL-2,6-diaminopimelate from (S)-tetrahydrodipicolinate (succinylase route): step 3/3. Its function is as follows. Catalyzes the hydrolysis of N-succinyl-L,L-diaminopimelic acid (SDAP), forming succinate and LL-2,6-diaminopimelate (DAP), an intermediate involved in the bacterial biosynthesis of lysine and meso-diaminopimelic acid, an essential component of bacterial cell walls. This chain is Succinyl-diaminopimelate desuccinylase, found in Rickettsia akari (strain Hartford).